Consider the following 242-residue polypeptide: Lectin-like protein At1g53060 (242 aa).

A legume-lectin like region spans residues 3–237; that stretch reads FHGDAEYASE…RHEILDWSFE (235 aa). Ser207 is modified (phosphoserine).

It belongs to the leguminous lectin family.

The polypeptide is Lectin-like protein At1g53060 (Arabidopsis thaliana (Mouse-ear cress)).